The primary structure comprises 266 residues: L-aspartate dehydrogenase (266 aa).

Residues alanine 123 and asparagine 189 each coordinate NAD(+). Histidine 219 is a catalytic residue.

It belongs to the L-aspartate dehydrogenase family.

The catalysed reaction is L-aspartate + NADP(+) + H2O = oxaloacetate + NH4(+) + NADPH + H(+). The enzyme catalyses L-aspartate + NAD(+) + H2O = oxaloacetate + NH4(+) + NADH + H(+). The protein operates within cofactor biosynthesis; NAD(+) biosynthesis; iminoaspartate from L-aspartate (dehydrogenase route): step 1/1. Specifically catalyzes the NAD or NADP-dependent dehydrogenation of L-aspartate to iminoaspartate. The protein is L-aspartate dehydrogenase of Cupriavidus necator (strain ATCC 17699 / DSM 428 / KCTC 22496 / NCIMB 10442 / H16 / Stanier 337) (Ralstonia eutropha).